The sequence spans 701 residues: Ubiquitin thioesterase zranb1-B (701 aa).

3 RanBP2-type zinc fingers span residues 3–33, 79–108, and 143–173; these read EDGIKWACEYCTFENWPSAIKCTMCRAPRPS, TSSKWSCQICTYLNWPRAIRCTQCLSQRRT, and IKGQHWTCSACTYENCAKAKKCVVCDHPTPN. Positions 10, 13, 24, 27, 85, 88, 99, and 102 each coordinate Zn(2+). Residues 108 to 121 are compositionally biased toward polar residues; that stretch reads TRSPTESPQSSGSG. The interval 108 to 129 is disordered; the sequence is TRSPTESPQSSGSGLRSIPGPI. The Zn(2+) site is built by Cys-150, Cys-153, Cys-164, and Cys-167. The tract at residues 197–220 is disordered; sequence RWRGGCSSSNSQRRSPPTSKRDSD. Residues 202 to 214 show a composition bias toward polar residues; that stretch reads CSSSNSQRRSPPT. 2 ANK repeats span residues 253 to 283 and 306 to 333; these read RKTDWLFLNACVGVVEGDLSAVEAYKTSGGD and YTLVHLSIRFQRQDMLAILLTEVAQHAA. An OTU domain is found at 425 to 585; it reads LYALWNRTAG…RGHFSALVAM (161 aa). Catalysis depends on Cys-436, which acts as the Nucleophile. The Proton acceptor role is filled by His-578.

The protein belongs to the peptidase C64 family.

The protein resides in the cytoplasm. Its subcellular location is the nucleus. It carries out the reaction Thiol-dependent hydrolysis of ester, thioester, amide, peptide and isopeptide bonds formed by the C-terminal Gly of ubiquitin (a 76-residue protein attached to proteins as an intracellular targeting signal).. Its function is as follows. Ubiquitin thioesterase, which specifically hydrolyzes 'Lys-29'-linked and 'Lys-33'-linked diubiquitin. Also cleaves 'Lys-63'-linked chains, but with 40-fold less efficiency compared to 'Lys-29'-linked ones. Positive regulator of the Wnt signaling pathway that deubiquitinates apc protein, a negative regulator of Wnt-mediated transcription. Acts as a regulator of autophagy by mediating deubiquitination of pik3c3/vps34, thereby promoting autophagosome maturation. Plays a role in the regulation of cell morphology and cytoskeletal organization. Required in the stress fiber dynamics and cell migration. The chain is Ubiquitin thioesterase zranb1-B (zranb1-b) from Xenopus laevis (African clawed frog).